We begin with the raw amino-acid sequence, 412 residues long: MIEEEVLKIIKPTEEDKKGIEKVLEIIRERLNKLDFEVEGSFRKGTWLRQDTDIDVFVFYPKDVGKEYLERNALNDIINRIKDLDYTLAYAEHPYVIVNINNVEVDIVPALRVESGDKAITAVDRTPFHTKYVTSHLDERGKDEVRLLKRFMKGIGVYGAELKVQGFSGYATELLIIYYGNFRKVLEEASKWKHPIKIELTKPMKIFSEPLIIPDPVDPKRNVTAAVSLKNIATFSIAAKYYLKNPSIEFFFPSKKVEEKVKGDVLILRLNLDEKSSEDIVWGQIKRSVNKIERALKQYGFRVIDVQAWGDTNNITIAVQLESKNIGQYYLNIGPQYYSETIEDFIQKNDNIWVGEDGRLYSIKERKEYDAETIAKKNIVLKVKYNIESYWLQNTEDQQIMKFLRKTPTWLK.

The ATP site is built by serine 41 and lysine 44. Positions 41 and 44 each coordinate CTP. 3 residues coordinate Mg(2+): aspartate 53, aspartate 55, and aspartate 106. Residues histidine 129, lysine 149, and tyrosine 158 each contribute to the ATP site. CTP contacts are provided by histidine 129, lysine 149, and tyrosine 158.

Belongs to the tRNA nucleotidyltransferase/poly(A) polymerase family. Archaeal CCA-adding enzyme subfamily. As to quaternary structure, homodimer. Mg(2+) serves as cofactor.

It catalyses the reaction a tRNA precursor + 2 CTP + ATP = a tRNA with a 3' CCA end + 3 diphosphate. It carries out the reaction a tRNA with a 3' CCA end + 2 CTP + ATP = a tRNA with a 3' CCACCA end + 3 diphosphate. Catalyzes the addition and repair of the essential 3'-terminal CCA sequence in tRNAs without using a nucleic acid template. Adds these three nucleotides in the order of C, C, and A to the tRNA nucleotide-73, using CTP and ATP as substrates and producing inorganic pyrophosphate. tRNA 3'-terminal CCA addition is required both for tRNA processing and repair. Also involved in tRNA surveillance by mediating tandem CCA addition to generate a CCACCA at the 3' terminus of unstable tRNAs. While stable tRNAs receive only 3'-terminal CCA, unstable tRNAs are marked with CCACCA and rapidly degraded. This chain is CCA-adding enzyme, found in Saccharolobus islandicus (strain M.16.27) (Sulfolobus islandicus).